The following is a 207-amino-acid chain: Cytochrome c biogenesis ATP-binding export protein CcmA 1 (207 aa).

One can recognise an ABC transporter domain in the interval 6–207 (LEALDLAGVR…KTSQTVRMGA (202 aa)). 38-45 (GENGSGKT) contacts ATP.

Belongs to the ABC transporter superfamily. CcmA exporter (TC 3.A.1.107) family. The complex is composed of two ATP-binding proteins (CcmA) and two transmembrane proteins (CcmB).

The protein localises to the cell inner membrane. It catalyses the reaction heme b(in) + ATP + H2O = heme b(out) + ADP + phosphate + H(+). Functionally, part of the ABC transporter complex CcmAB involved in the biogenesis of c-type cytochromes; once thought to export heme, this seems not to be the case, but its exact role is uncertain. Responsible for energy coupling to the transport system. This is Cytochrome c biogenesis ATP-binding export protein CcmA 1 from Cupriavidus metallidurans (strain ATCC 43123 / DSM 2839 / NBRC 102507 / CH34) (Ralstonia metallidurans).